The primary structure comprises 421 residues: MRLLYLHADRFEYKTVKPALKNPPDPPGEASFGEALVVFTTVEDGDGPQTVMYAASDIASHSSRLKVTTVILYPYAHLSSRLAKPMAAHKRLIELEGALRTKFPGHVHRAPFGWYKSFSIACKGHPLAELSRSFTEAGALQPWPAVEDYKTGLSGEVLARAGLLGGGSLSPASWALEVHRRLAEEVVGPAESVGFGESLSEAYQACISSSVTTLLMGPYPPSIVFGPLEDDPVEAVSRVLGLISPQLEGVKPLLSGGEGALKASSPDGAELPVAFLKEGRVCLGPTLSFFKLAVSMLVEKARKEGLTPYLNPTLTPVQSAVIPVDSESEGYAQRIAEDLAASGVRVSIVRGSGLGRRVREAGRSWASLVIVVGKREEETGTVVVRRRWEPGKQEVLTLDELSSEAKKLASGSRGSLYSTTL.

Belongs to the class-II aminoacyl-tRNA synthetase family. Archaea-specific ThrRS editing domain subfamily. As to quaternary structure, probably interacts with its catalytic subunit.

The protein resides in the cytoplasm. Freestanding tRNA editing subunit of threonine--tRNA ligase, the catalytic subunit is probably AC Q9YDW0. Deacylates (edits) mischarged L-seryl-tRNA(Thr) in trans; has no activity on correctly charged L-threonyl-tRNA(Thr). Probably does not aminoacylate tRNA(Thr). Deacylates correctly charged glycyl-tRNA(Gly), but not glycyl-tRNA(Gly)(2'-dA76) (the terminal 2'-OH of tRNA adenine 76 has been dehydroxylated) nor the 2'-fluoro tRNA derivative, strongly suggesting the editing function is catalyzed by the 2'-OH of A76 of tRNA(Thr). The chain is Threonine--tRNA ligase editing subunit (thrS2) from Aeropyrum pernix (strain ATCC 700893 / DSM 11879 / JCM 9820 / NBRC 100138 / K1).